A 295-amino-acid chain; its full sequence is Sulfotransferase 1 family member D1 (295 aa).

48–53 lines the 3'-phosphoadenylyl sulfate pocket; that stretch reads KSGTTW. Substrate contacts are provided by residues Phe81 and 106 to 108; that span reads KTH. Residue His108 is the Proton acceptor of the active site. Residues Arg130 and Ser138 each coordinate 3'-phosphoadenylyl sulfate. Substrate is bound at residue Phe142. Residues Tyr193, Ser227, and 257–259 each bind 3'-phosphoadenylyl sulfate; that span reads RKG.

The protein belongs to the sulfotransferase 1 family.

It is found in the cytoplasm. Its function is as follows. Sulfotransferase with broad substrate specificity that utilizes 3'-phospho-5'-adenylyl sulfate (PAPS) as sulfonate donor to catalyze the sulfate conjugation of catecholamines, such as dopamine, prostaglandins, leukotriene E4, drugs and xenobiotic compounds. Has sulfotransferase activity towards p-nitrophenol, 2-naphthylamine and minoxidil (in vitro). Sulfonation increases the water solubility of most compounds, and therefore their renal excretion, but it can also result in bioactivation to form active metabolites. The chain is Sulfotransferase 1 family member D1 (Sult1d1) from Rattus norvegicus (Rat).